The sequence spans 155 residues: Protein SprT-like (155 aa).

Positions 6–148 constitute a SprT-like domain; the sequence is LQRLVERVSL…VCGQCGGKLM (143 aa). H67 contributes to the Zn(2+) binding site. E68 is a catalytic residue. H71 serves as a coordination point for Zn(2+).

The protein belongs to the SprT family. It depends on Zn(2+) as a cofactor.

It is found in the cytoplasm. The chain is Protein SprT-like from Geobacillus sp. (strain WCH70).